The sequence spans 148 residues: UPF0756 membrane protein KPN78578_11500 (148 aa).

Helical transmembrane passes span 14 to 34 (ALGFISHNTTVAISILVLIIV), 51 to 71 (LTVGIIILTIGVMAPIASGTL), 86 to 106 (LLAIAVGVFVSWLGGRGVSLM), and 121 to 141 (VLGVALFRGVPVGPLIAAGII).

The protein belongs to the UPF0756 family.

It localises to the cell membrane. This chain is UPF0756 membrane protein KPN78578_11500, found in Klebsiella pneumoniae subsp. pneumoniae (strain ATCC 700721 / MGH 78578).